The sequence spans 778 residues: Ral guanine nucleotide dissociation stimulator-like 2 (778 aa).

The segment covering 1 to 15 (MLPRPLRLLLDTTPP) has biased composition (low complexity). Residues 1–59 (MLPRPLRLLLDTTPPGGVVLSSFRSRDPEEGGDPGGRAVGGGQEEEDEEEEEASVSVWD) are disordered. The span at 33-42 (DPGGRAVGGG) shows a compositional bias: gly residues. A compositionally biased stretch (acidic residues) spans 43–59 (QEEEDEEEEEASVSVWD). Residues 88 to 212 (SSRRLRAGTL…GSADLIRNLR (125 aa)) form the N-terminal Ras-GEF domain. The 271-residue stretch at 243 to 513 (LADHLAEQLT…HRVSCEVEPP (271 aa)) folds into the Ras-GEF domain. Disordered stretches follow at residues 503–524 (SHRVSCEVEPPGTSDSPAARTP), 541–564 (GGPTPLVSWDRPSVGGDEVPGTPA), 581–647 (SLDS…GPGS), and 735–769 (RRPSAATPGSHSGPSASGTPPSEGGGGSFPRIKAT). The segment covering 581-592 (SLDSALESSPSL) has biased composition (low complexity). Over residues 620–632 (CGSPLSGNTGEGT) the composition is skewed to polar residues. In terms of domain architecture, Ras-associating spans 649–736 (DCRIIRVQME…HDFLLRQRRR (88 aa)). Over residues 738–756 (SAATPGSHSGPSASGTPPS) the composition is skewed to low complexity.

Interacts with SAMD9.

Its function is as follows. Probable guanine nucleotide exchange factor. Putative effector of Ras and/or Rap. Associates with the GTP-bound form of Rap 1A and H-Ras in vitro. This chain is Ral guanine nucleotide dissociation stimulator-like 2 (Rgl2), found in Mus musculus (Mouse).